Reading from the N-terminus, the 89-residue chain is UPF0335 protein Caul_0876 (89 aa).

This sequence belongs to the UPF0335 family.

This chain is UPF0335 protein Caul_0876, found in Caulobacter sp. (strain K31).